Consider the following 147-residue polypeptide: Hemoglobin subunit beta-2 (147 aa).

Valine 2 carries the N-acetylvaline modification. The 145-residue stretch at 3–147 (HLTDAEKATV…VASALAHKYH (145 aa)) folds into the Globin domain. Serine 13 is subject to Phosphoserine. Position 18 is an N6-succinyllysine (lysine 18). Phosphoserine is present on residues serine 51 and serine 53. The heme b site is built by histidine 64 and histidine 93. Residue arginine 105 is modified to Asymmetric dimethylarginine. A Phosphothreonine modification is found at threonine 124. Position 126 is a phosphoserine; in variant Ser-126 (cysteine 126).

This sequence belongs to the globin family. In terms of assembly, heterotetramer of two alpha chains and two beta chains. In terms of tissue distribution, red blood cells.

Involved in oxygen transport from the lung to the various peripheral tissues. The polypeptide is Hemoglobin subunit beta-2 (Rattus norvegicus (Rat)).